We begin with the raw amino-acid sequence, 274 residues long: Putative ABC transporter ATP-binding protein alr3946 (274 aa).

Residues 6–242 form the ABC transporter domain; sequence LTFEQVYYTY…REILDSIELG (237 aa). 40–47 is a binding site for ATP; sequence GRNGCGKT.

It belongs to the ABC transporter superfamily.

The protein localises to the cell inner membrane. Its function is as follows. Probably part of an ABC transporter complex. Responsible for energy coupling to the transport system. The chain is Putative ABC transporter ATP-binding protein alr3946 from Nostoc sp. (strain PCC 7120 / SAG 25.82 / UTEX 2576).